Consider the following 428-residue polypeptide: Sialidase-3 (428 aa).

The FRIP motif motif lies at 24–27 (YRIP). Residues arginine 25 and arginine 45 each contribute to the substrate site. The active-site Proton acceptor is the aspartate 50. Residues 129-140 (IYSQDAGCSWSE) form a BNR 1 repeat. 2 residues coordinate substrate: tyrosine 179 and tyrosine 181. The stretch at 203–214 (IYSDDLGVTWHH) is one BNR 2 repeat. 2 residues coordinate substrate: glutamate 225 and arginine 245. One copy of the BNR 3 repeat lies at 254–265 (ALSTDHGEGFQR). Residues 294 to 318 (RCQDSSSKDAPTIQQSSPGSSLRLE) form a disordered region. Residues 301-313 (KDAPTIQQSSPGS) show a composition bias toward polar residues. Phosphoserine is present on serine 313. Residue arginine 340 coordinates substrate. Tyrosine 370 acts as the Nucleophile in catalysis. Glutamate 387 is a catalytic residue.

Belongs to the glycosyl hydrolase 33 family. As to quaternary structure, interacts with CAV1; this interaction enhances NEU3 sialidase activity within caveola. Interacts with EGFR; this interaction mediates desialylation of EGFR and enhances downstream signaling. Post-translationally, palmitoylated; may regulate intracellular trafficking and anchorage to plasma membrane and endomembranes. In terms of tissue distribution, highly expressed in skeletal muscle, testis, adrenal gland and thymus, followed by pancreas, liver, heart and thymus. Weakly expressed in kidney, placenta, brain and lung.

It is found in the cell membrane. Its subcellular location is the membrane. It localises to the caveola. The protein resides in the early endosome membrane. The protein localises to the recycling endosome membrane. It is found in the lysosome membrane. It catalyses the reaction Hydrolysis of alpha-(2-&gt;3)-, alpha-(2-&gt;6)-, alpha-(2-&gt;8)- glycosidic linkages of terminal sialic acid residues in oligosaccharides, glycoproteins, glycolipids, colominic acid and synthetic substrates.. The catalysed reaction is a ganglioside GD1a + H2O = a ganglioside GM1 + N-acetylneuraminate. The enzyme catalyses a ganglioside GD1a (d18:1(4E)) + H2O = a ganglioside GM1 (d18:1(4E)) + N-acetylneuraminate. It carries out the reaction a ganglioside GD1b + H2O = a ganglioside GM1 + N-acetylneuraminate. It catalyses the reaction a ganglioside GD1b (d18:1(4E)) + H2O = a ganglioside GM1 (d18:1(4E)) + N-acetylneuraminate. The catalysed reaction is a ganglioside GD3 + H2O = a ganglioside GM3 + N-acetylneuraminate. The enzyme catalyses a ganglioside GD3 (d18:1(4E)) + H2O = a ganglioside GM3 (d18:1(4E)) + N-acetylneuraminate. It carries out the reaction a ganglioside GM3 + H2O = a beta-D-galactosyl-(1-&gt;4)-beta-D-glucosyl-(1&lt;-&gt;1)-ceramide + N-acetylneuraminate. It catalyses the reaction a ganglioside GM1 + H2O = a ganglioside GA1 + N-acetylneuraminate. The catalysed reaction is a ganglioside GM1 (d18:1(4E)) + H2O = a ganglioside GA1 (d18:1(4E)) + N-acetylneuraminate. The enzyme catalyses a ganglioside GM2 (d18:1(4E)) + H2O = a ganglioside GA2 (d18:1(4E)) + N-acetylneuraminate. It carries out the reaction a ganglioside GM3 (d18:1(4E)) + H2O = a beta-D-Gal-(1-&gt;4)-beta-D-Glc-(1&lt;-&gt;1)-Cer(d18:1(4E)) + N-acetylneuraminate. It catalyses the reaction a ganglioside GT1b + H2O = a ganglioside GD1b + N-acetylneuraminate. Functionally, exo-alpha-sialidase that catalyzes the hydrolytic cleavage of the terminal sialic acid (N-acetylneuraminic acid, Neu5Ac) of a glycan moiety in the catabolism of glycolipids, glycoproteins and oligosacharides. Displays high catalytic efficiency for gangliosides including alpha-(2-&gt;3)-sialylated GD1a and GM3 and alpha-(2-&gt;8)-sialylated GD3. Plays a role in the regulation of transmembrane signaling through the modulation of ganglioside content of the lipid bilayer and by direct interaction with signaling receptors, such as EGFR. Desialylates EGFR and activates downstream signaling in proliferating cells. Contributes to clathrin-mediated endocytosis by regulating sorting of endocytosed receptors to early and recycling endosomes. The protein is Sialidase-3 (NEU3) of Homo sapiens (Human).